Reading from the N-terminus, the 652-residue chain is NAD(P)H-quinone oxidoreductase subunit 5, chloroplastic (652 aa).

Helical transmembrane passes span 9 to 29, 40 to 60, 91 to 111, 124 to 144, 147 to 167, 188 to 208, 225 to 245, 258 to 278, 289 to 309, 327 to 347, 354 to 374, 395 to 415, 424 to 444, 482 to 502, 526 to 546, and 630 to 650; these read WLIP…LISF, YSFL…LILF, PLTA…LIYT, FFAY…SPNL, IYVF…FWFT, GLLL…FDVI, LAIF…AQFP, TPIS…FLVA, FLMD…ATIA, LGYM…FHLM, ALLF…VGFN, GNAF…ACFW, AFVH…LTSF, TLPL…GTPF, LFIA…AYLI, and ILMI…YYSL.

This sequence belongs to the complex I subunit 5 family. In terms of assembly, NDH is composed of at least 16 different subunits, 5 of which are encoded in the nucleus.

Its subcellular location is the plastid. It is found in the chloroplast thylakoid membrane. It catalyses the reaction a plastoquinone + NADH + (n+1) H(+)(in) = a plastoquinol + NAD(+) + n H(+)(out). The enzyme catalyses a plastoquinone + NADPH + (n+1) H(+)(in) = a plastoquinol + NADP(+) + n H(+)(out). NDH shuttles electrons from NAD(P)H:plastoquinone, via FMN and iron-sulfur (Fe-S) centers, to quinones in the photosynthetic chain and possibly in a chloroplast respiratory chain. The immediate electron acceptor for the enzyme in this species is believed to be plastoquinone. Couples the redox reaction to proton translocation, and thus conserves the redox energy in a proton gradient. This Mesostigma viride (Green alga) protein is NAD(P)H-quinone oxidoreductase subunit 5, chloroplastic (ndhF).